The sequence spans 156 residues: Cyanate hydratase (156 aa).

Active-site residues include Arg96, Glu99, and Ser122.

Belongs to the cyanase family.

The catalysed reaction is cyanate + hydrogencarbonate + 3 H(+) = NH4(+) + 2 CO2. Functionally, catalyzes the reaction of cyanate with bicarbonate to produce ammonia and carbon dioxide. This Burkholderia mallei (strain NCTC 10247) protein is Cyanate hydratase.